The chain runs to 678 residues: UvrABC system protein B (678 aa).

One can recognise a Helicase ATP-binding domain in the interval 26–185 (EGLEDGEAFQ…LTTMQYTRND (160 aa)). An ATP-binding site is contributed by 39-46 (GVTGSGKT). Positions 92-115 (YYDYYQPEAYVPASDTYIAKDSSV) match the Beta-hairpin motif. The Helicase C-terminal domain maps to 430–596 (QVDDLLGEIR…KLNKKITDIL (167 aa)). The segment at 597-630 (EDSPYAPKPGASAAKLKAAEADGEYSPQEMQRMT) is disordered. The UVR domain maps to 635-670 (ASEIKRMEKQMYQAAKDLDFELAAKLRDDLKRLKSS).

The protein belongs to the UvrB family. As to quaternary structure, forms a heterotetramer with UvrA during the search for lesions. Interacts with UvrC in an incision complex.

The protein resides in the cytoplasm. Functionally, the UvrABC repair system catalyzes the recognition and processing of DNA lesions. A damage recognition complex composed of 2 UvrA and 2 UvrB subunits scans DNA for abnormalities. Upon binding of the UvrA(2)B(2) complex to a putative damaged site, the DNA wraps around one UvrB monomer. DNA wrap is dependent on ATP binding by UvrB and probably causes local melting of the DNA helix, facilitating insertion of UvrB beta-hairpin between the DNA strands. Then UvrB probes one DNA strand for the presence of a lesion. If a lesion is found the UvrA subunits dissociate and the UvrB-DNA preincision complex is formed. This complex is subsequently bound by UvrC and the second UvrB is released. If no lesion is found, the DNA wraps around the other UvrB subunit that will check the other stand for damage. The chain is UvrABC system protein B from Hydrogenovibrio crunogenus (strain DSM 25203 / XCL-2) (Thiomicrospira crunogena).